A 179-amino-acid polypeptide reads, in one-letter code: Large ribosomal subunit protein uL5 (179 aa).

Belongs to the universal ribosomal protein uL5 family. Part of the 50S ribosomal subunit; part of the 5S rRNA/L5/L18/L25 subcomplex. Contacts the 5S rRNA and the P site tRNA. Forms a bridge to the 30S subunit in the 70S ribosome.

This is one of the proteins that bind and probably mediate the attachment of the 5S RNA into the large ribosomal subunit, where it forms part of the central protuberance. In the 70S ribosome it contacts protein S13 of the 30S subunit (bridge B1b), connecting the 2 subunits; this bridge is implicated in subunit movement. Contacts the P site tRNA; the 5S rRNA and some of its associated proteins might help stabilize positioning of ribosome-bound tRNAs. In Rickettsia africae (strain ESF-5), this protein is Large ribosomal subunit protein uL5.